The sequence spans 186 residues: TATA box-binding protein-like 1 (186 aa).

The protein belongs to the TBP family. In terms of assembly, binds TFIIA and TFIIB.

The protein resides in the cytoplasm. It localises to the nucleus. In terms of biological role, part of a specialized transcription system that mediates the transcription of most ribosomal proteins through the 5'-TCT-3' motif which is a core promoter element at these genes. Seems to also mediate the transcription of NF1. Does not bind the TATA box. The polypeptide is TATA box-binding protein-like 1 (TBPL1) (Bos taurus (Bovine)).